The primary structure comprises 320 residues: Aminoacyl tRNA synthase complex-interacting multifunctional protein 2 (320 aa).

At serine 36 the chain carries Phosphoserine. Residues 82–162 form an interaction with PRKN region; it reads TPDADLDVTN…HTHSSVKNVP (81 aa). Residues 162–225 form an interaction with TP53 region; the sequence is PENLVKCFGE…FLFSLFGQKH (64 aa). In terms of domain architecture, GST C-terminal spans 220-317; that stretch reads LFGQKHNAVT…NLAPFSTALQ (98 aa).

As to quaternary structure, part of the multisynthetase complex (MSC), a multisubunit complex that groups tRNA ligases for Arg (RARS1), Asp (DARS1), Gln (QARS1), Ile (IARS1), Leu (LARS1), Lys (KARS1), Met (MARS1) the bifunctional ligase for Glu and Pro (EPRS1) and the auxiliary subunits AIMP1/p43, AIMP2/p38 and EEF1E1/p18. Interacts (via N-terminus) with KARS1. Interacts with EPRS1. Forms a linear complex that contains MARS1, EEF1E1, EPRS1 and AIMP2 that is at the core of the multisubunit complex. Binds FUBP1 (via C-terminus). Interacts in both its unphosphorylated and phosphorylated forms with p53/TP53 (via N-terminus) in the nucleus following UV irradiation. Interacts (via N-terminus) with PRKN/parkin (via first RING-type domain). Interacts with TARS3. Post-translationally, phosphorylated on serine residues in response to UV irradiation. In terms of processing, ubiquitinated by PRKN, leading to its degradation by the proteasome.

Its subcellular location is the cytoplasm. It localises to the cytosol. It is found in the nucleus. Required for assembly and stability of the aminoacyl-tRNA synthase complex. Mediates ubiquitination and degradation of FUBP1, a transcriptional activator of MYC, leading to MYC down-regulation which is required for aveolar type II cell differentiation. Blocks MDM2-mediated ubiquitination and degradation of p53/TP53. Functions as a proapoptotic factor. This is Aminoacyl tRNA synthase complex-interacting multifunctional protein 2 (Aimp2) from Mus musculus (Mouse).